A 198-amino-acid chain; its full sequence is Protoplast secreted protein 2 (198 aa).

The signal sequence occupies residues 1 to 21 (MPRVAIIIYTLYGHVAATAEA). A Flavodoxin-like domain is found at 22–191 (EKKGIEAAGG…QVHEIQGKTF (170 aa)).

It belongs to the WrbA family.

It is found in the secreted. The sequence is that of Protoplast secreted protein 2 (PST2) from Saccharomyces cerevisiae (strain ATCC 204508 / S288c) (Baker's yeast).